Reading from the N-terminus, the 94-residue chain is Translation initiation factor 1A 2 (94 aa).

The region spanning 6–80 is the S1-like domain; it reads GRRNLRMPSD…EKANIEWRYS (75 aa).

Belongs to the eIF-1A family.

Its function is as follows. Seems to be required for maximal rate of protein biosynthesis. Enhances ribosome dissociation into subunits and stabilizes the binding of the initiator Met-tRNA(I) to 40 S ribosomal subunits. The protein is Translation initiation factor 1A 2 of Haloquadratum walsbyi (strain DSM 16790 / HBSQ001).